The primary structure comprises 87 residues: UPF0250 protein YbeD (87 aa).

It belongs to the UPF0250 family.

The protein is UPF0250 protein YbeD of Shigella boydii serotype 18 (strain CDC 3083-94 / BS512).